Consider the following 267-residue polypeptide: 3-methyl-2-oxobutanoate hydroxymethyltransferase (267 aa).

Asp45 and Asp84 together coordinate Mg(2+). 3-methyl-2-oxobutanoate contacts are provided by residues 45–46 (DS), Asp84, and Lys113. Glu115 provides a ligand contact to Mg(2+). The active-site Proton acceptor is the Glu182.

Belongs to the PanB family. As to quaternary structure, homodecamer; pentamer of dimers. The cofactor is Mg(2+).

It localises to the cytoplasm. The catalysed reaction is 3-methyl-2-oxobutanoate + (6R)-5,10-methylene-5,6,7,8-tetrahydrofolate + H2O = 2-dehydropantoate + (6S)-5,6,7,8-tetrahydrofolate. Its pathway is cofactor biosynthesis; coenzyme A biosynthesis. Its function is as follows. Catalyzes the reversible reaction in which hydroxymethyl group from 5,10-methylenetetrahydrofolate is transferred onto alpha-ketoisovalerate to form ketopantoate. This chain is 3-methyl-2-oxobutanoate hydroxymethyltransferase, found in Saccharolobus solfataricus (strain ATCC 35092 / DSM 1617 / JCM 11322 / P2) (Sulfolobus solfataricus).